An 80-amino-acid chain; its full sequence is Clavanin-D (80 aa).

The first 19 residues, 1–19 (MKTTILILLILGLGINAKS), serve as a signal peptide directing secretion. A propeptide spanning residues 20-29 (LEERKSEEEK) is cleaved from the precursor. Phe-52 is modified (phenylalanine amide). A propeptide spanning residues 54-80 (DDQQDNGKFYGHYAEDNGKHWYDTGDQ) is cleaved from the precursor.

As to expression, hemocytes and pharyngeal tissues.

Its subcellular location is the secreted. Its function is as follows. Has antimicrobial activity against E.coli, L.monocytogenes and C.albicans. In Styela clava (Sea squirt), this protein is Clavanin-D.